The sequence spans 121 residues: Large ribosomal subunit protein bL12 (121 aa).

Belongs to the bacterial ribosomal protein bL12 family. Homodimer. Part of the ribosomal stalk of the 50S ribosomal subunit. Forms a multimeric L10(L12)X complex, where L10 forms an elongated spine to which 2 to 4 L12 dimers bind in a sequential fashion. Binds GTP-bound translation factors.

In terms of biological role, forms part of the ribosomal stalk which helps the ribosome interact with GTP-bound translation factors. Is thus essential for accurate translation. The chain is Large ribosomal subunit protein bL12 from Halalkalibacterium halodurans (strain ATCC BAA-125 / DSM 18197 / FERM 7344 / JCM 9153 / C-125) (Bacillus halodurans).